A 273-amino-acid polypeptide reads, in one-letter code: 2,3,4,5-tetrahydropyridine-2,6-dicarboxylate N-succinyltransferase (273 aa).

Substrate-binding residues include Arg-104 and Asp-141.

This sequence belongs to the transferase hexapeptide repeat family. Homotrimer.

The protein resides in the cytoplasm. The catalysed reaction is (S)-2,3,4,5-tetrahydrodipicolinate + succinyl-CoA + H2O = (S)-2-succinylamino-6-oxoheptanedioate + CoA. The protein operates within amino-acid biosynthesis; L-lysine biosynthesis via DAP pathway; LL-2,6-diaminopimelate from (S)-tetrahydrodipicolinate (succinylase route): step 1/3. The sequence is that of 2,3,4,5-tetrahydropyridine-2,6-dicarboxylate N-succinyltransferase from Neisseria gonorrhoeae (strain ATCC 700825 / FA 1090).